Here is a 346-residue protein sequence, read N- to C-terminus: Very-long-chain 3-oxoacyl-CoA reductase (346 aa).

A helical membrane pass occupies residues 19–39 (LIYGVLFVGVYKITTFTLSVG). NADP(+) is bound by residues valine 65, aspartate 119, asparagine 146, tyrosine 220, lysine 224, valine 253, and serine 255. Tyrosine 220 (proton donor) is an active-site residue. The active-site Lowers pKa of active site Tyr is the lysine 224.

It belongs to the short-chain dehydrogenases/reductases (SDR) family.

It localises to the endoplasmic reticulum membrane. It catalyses the reaction a very-long-chain (3R)-3-hydroxyacyl-CoA + NADP(+) = a very-long-chain 3-oxoacyl-CoA + NADPH + H(+). Its pathway is lipid metabolism; fatty acid biosynthesis. In terms of biological role, component of the microsomal membrane bound fatty acid elongation system, which produces the 26-carbon very long-chain fatty acids (VLCFA) from palmitate. Catalyzes the reduction of the 3-ketoacyl-CoA intermediate that is formed in each cycle of fatty acid elongation. VLCFAs serve as precursors for ceramide and sphingolipids. This Debaryomyces hansenii (strain ATCC 36239 / CBS 767 / BCRC 21394 / JCM 1990 / NBRC 0083 / IGC 2968) (Yeast) protein is Very-long-chain 3-oxoacyl-CoA reductase.